The sequence spans 72 residues: Small ribosomal subunit protein eS17 (72 aa).

Belongs to the eukaryotic ribosomal protein eS17 family.

The protein is Small ribosomal subunit protein eS17 of Nanoarchaeum equitans (strain Kin4-M).